We begin with the raw amino-acid sequence, 228 residues long: Transcription factor zip-11 (228 aa).

Residues 166-202 (RKRQQNKVAAARYRDKQKAKWQDLLDQLEAEEDRNQR) form a basic motif region. Residues 166–224 (RKRQQNKVAAARYRDKQKAKWQDLLDQLEAEEDRNQRLKLQAGHLEKEVAEMRQAFLAK) enclose the bZIP domain. Residues 203 to 210 (LKLQAGHL) form a leucine-zipper region.

This sequence belongs to the bZIP family. Interacts with CCAAT/enhancer-binding protein cebp-2.

The protein localises to the nucleus. Transcription factor. Involved in modulating innate immune response pathways, acting to promote resistance against infection by Gram-negative bacterium P.aeruginosa strain PA14. May act as part of a feedback regulatory loop with the pmk-1/p38 MAPK pathway. May also function in concert with CCAAT/enhancer-binding protein cebp-2 to mediate immune responses, independently of the pmk-1/p38 MAPK pathway. The sequence is that of Transcription factor zip-11 from Caenorhabditis elegans.